Here is a 226-residue protein sequence, read N- to C-terminus: MTDERAAGGGATRRRKSLSEKQISILEFIQRTIAGQGYPPSMREIGDAVGLASLSSVTHQLNQLELSGYLRRDPNRPRALEVLIDLPGTGTAESGEPSTPVGDAAMVPMVGRIAAGIPITAEQMVEEVFPLPRQLVGKGDLFMLRVVGDSMIDAAICDGDWVVVRQQKTAENGDIVAAMLDDEATVKVFRQRDGHTWLLARNSAFEPILGDFAEVVGKVVAVMRSV.

Positions 42 to 62 form a DNA-binding region, H-T-H motif; that stretch reads MREIGDAVGLASLSSVTHQLN. Residues S150 and K187 each act as for autocatalytic cleavage activity in the active site.

This sequence belongs to the peptidase S24 family. Homodimer.

The enzyme catalyses Hydrolysis of Ala-|-Gly bond in repressor LexA.. In terms of biological role, represses a number of genes involved in the response to DNA damage (SOS response), including recA and lexA. In the presence of single-stranded DNA, RecA interacts with LexA causing an autocatalytic cleavage which disrupts the DNA-binding part of LexA, leading to derepression of the SOS regulon and eventually DNA repair. The sequence is that of LexA repressor from Clavibacter sepedonicus (Clavibacter michiganensis subsp. sepedonicus).